Here is a 1093-residue protein sequence, read N- to C-terminus: Phosphorylase b kinase regulatory subunit beta (1093 aa).

At Ala2 the chain carries N-acetylalanine. Ala4 carries the post-translational modification Phosphoserine. The calmodulin-binding stretch occupies residues 7–29 (LTAEVSWKVLERRARTKRSGSVY). At Ser12 the chain carries Phosphoserine; by autocatalysis. Ser27 and Ser701 each carry phosphoserine. Positions 689 to 716 (EPPKHSKVKRQSSTPSAPELGQQPDVNI) are disordered. Calmodulin-binding regions lie at residues 768–795 (RVYRRAGSQKLWLAVRYGAAFTQKFSSS) and 920–951 (NGRCWLNRRQIDGSLNRTPTGFYDRVWQILER). The S-farnesyl cysteine moiety is linked to residue Cys1090.

Belongs to the phosphorylase b kinase regulatory chain family. Hexadecamer of 4 heterotetramers, each composed of alpha, beta, gamma, and delta subunits. Alpha (PHKA1 or PHKA2) and beta (PHKB) are regulatory subunits, gamma (PHKG1 or PHKG2) is the catalytic subunit, and delta is calmodulin. In terms of processing, ser-701 is probably phosphorylated by PKA. Post-translationally, although the final Cys may be farnesylated, the terminal tripeptide is probably not removed, and the C-terminus is not methylated.

It is found in the cell membrane. The protein operates within glycan biosynthesis; glycogen metabolism. With respect to regulation, by phosphorylation of various serine residues. Functionally, phosphorylase b kinase catalyzes the phosphorylation of serine in certain substrates, including troponin I. The beta chain acts as a regulatory unit and modulates the activity of the holoenzyme in response to phosphorylation. The polypeptide is Phosphorylase b kinase regulatory subunit beta (PHKB) (Homo sapiens (Human)).